We begin with the raw amino-acid sequence, 288 residues long: Oxaloacetate decarboxylase (288 aa).

A substrate-binding site is contributed by serine 47. Aspartate 85 contributes to the Mg(2+) binding site. Substrate is bound by residues arginine 156 and histidine 232.

It belongs to the isocitrate lyase/PEP mutase superfamily. Oxaloacetate decarboxylase family. Homotetramer; dimer of dimers. Requires Mg(2+) as cofactor.

It catalyses the reaction oxaloacetate + H(+) = pyruvate + CO2. Functionally, catalyzes the decarboxylation of oxaloacetate into pyruvate. Seems to play a role in maintaining cellular concentrations of bicarbonate and pyruvate. This chain is Oxaloacetate decarboxylase, found in Bradyrhizobium sp. (strain ORS 278).